The primary structure comprises 267 residues: Putative hydro-lyase RALTA_B1245 (267 aa).

Belongs to the D-glutamate cyclase family.

The polypeptide is Putative hydro-lyase RALTA_B1245 (Cupriavidus taiwanensis (strain DSM 17343 / BCRC 17206 / CCUG 44338 / CIP 107171 / LMG 19424 / R1) (Ralstonia taiwanensis (strain LMG 19424))).